The following is a 236-amino-acid chain: Orotidine 5'-phosphate decarboxylase (236 aa).

Residues Asp11, Lys33, 60 to 69 (DLKLHDIPNT), Thr119, Arg181, Gln190, Gly210, and Arg211 each bind substrate. The active-site Proton donor is the Lys62.

The protein belongs to the OMP decarboxylase family. Type 1 subfamily. Homodimer.

It carries out the reaction orotidine 5'-phosphate + H(+) = UMP + CO2. Its pathway is pyrimidine metabolism; UMP biosynthesis via de novo pathway; UMP from orotate: step 2/2. Its function is as follows. Catalyzes the decarboxylation of orotidine 5'-monophosphate (OMP) to uridine 5'-monophosphate (UMP). The sequence is that of Orotidine 5'-phosphate decarboxylase from Cutibacterium acnes (strain DSM 16379 / KPA171202) (Propionibacterium acnes).